A 690-amino-acid polypeptide reads, in one-letter code: MPYLHRSLRPQPQPVPGDARTIHSSGQSFEQLRQGCLQSGTLFEDADFPASNVSLFYSERPQVPFVWKRPGEIVEKPEFILGGATRTDICQGELGDCWLLAAIASLTLNQKALTRVVPQDQGFGSGYAGIFHFQFWQHSEWLDVVIDDRLPTFKDRLVFLHSADHNEFWSALLEKAYAKLNGSYEALKGGSAIEAMEDFTGGVAENFQIREAPEDFFEILEKALKRGSLLGCSIDTLNASESEARTSLGLIKGHAYTVTGLDQVNFHGQRIKLIRVRNPWGQVEWNGPWSDSSPEWRSVDLEEQKRLGHTALDDGEFWMAFKDFKIHFDKVEICNLTPDALEDSALHRWEVTIHQGSWVRGSTAGGCRNFLDTFWTNPQIKLSLTERDEGQEGCTFLAALMQKDRRRLKRFGANMLTIGYAIYQCPDKDGHLSRDFFRYHASLARSKTFINLREVSERFQLPPGDYILIPSTFEPHQEADFCLRIFSEKRAVTRDLDENIDIDLPELPKPTPQEEETEEEQQFRALFQRVAGEDMEVSAEELEYVLNAVLQKKTALKFKRLSLLSCRNIISLMDTSGNGKLEFEEFRVFWDKLKHWMDLFLQFDVDKSGTMSSYELRTALKAAGFQLGGHLLQLIVLRYADEDLQLDFDDYLNCLVRLENASRVFQSLSVKNKDFIHLNINEFISLTMNI.

The tract at residues 1–23 is disordered; it reads MPYLHRSLRPQPQPVPGDARTIH. One can recognise a Calpain catalytic domain in the interval 42-337; the sequence is LFEDADFPAS…FDKVEICNLT (296 aa). Residues L81, G83, and D88 each coordinate Ca(2+). C97 is a catalytic residue. E167 lines the Ca(2+) pocket. Active-site residues include H254 and N278. Ca(2+)-binding residues include E284, D291, L312, D314, and E316. Positions 338 to 521 are domain III; the sequence is PDALEDSALH…PQEEETEEEQ (184 aa). EF-hand domains lie at 518–552, 561–589, and 591–626; these read EEEQ…VLQK, LSLL…FRVF, and DKLK…AGFQ. The tract at residues 522 to 690 is domain IV; it reads QFRALFQRVA…NEFISLTMNI (169 aa). Positions 574, 576, 578, 580, 585, 604, 606, 608, 610, and 615 each coordinate Ca(2+).

It belongs to the peptidase C2 family. Predominantly expressed in stomach and small intestine, although low levels of expression in other organs.

Its subcellular location is the cytoplasm. Its function is as follows. Calcium-regulated non-lysosomal thiol-protease. This chain is Calpain-9 (Capn9), found in Mus musculus (Mouse).